A 1488-amino-acid chain; its full sequence is Chromosome partition protein MukB (1488 aa).

34–41 is a binding site for ATP; that stretch reads GGNGAGKS. Coiled-coil stretches lie at residues 326–418, 444–472, and 509–602; these read LEAD…QYNQ, LDTF…QTAH, and RHLA…QRAP. The flexible hinge stretch occupies residues 666–783; that stretch reads PGGAEDQRLN…SLPIFGRAAR (118 aa). 3 coiled-coil regions span residues 835–923, 977–1116, and 1209–1265; these read EAEI…AKLE, EMLS…AKAG, and VEAI…LQSV. The tract at residues 1049 to 1074 is disordered; the sequence is ADSGAEERARQRRDELHAQLSNNRSR. Residues 1051-1065 show a composition bias toward basic and acidic residues; it reads SGAEERARQRRDELH.

It belongs to the SMC family. MukB subfamily. Homodimerization via its hinge domain. Binds to DNA via its C-terminal region. Interacts, and probably forms a ternary complex, with MukE and MukF via its C-terminal region. The complex formation is stimulated by calcium or magnesium. Interacts with tubulin-related protein FtsZ.

It is found in the cytoplasm. Its subcellular location is the nucleoid. Its function is as follows. Plays a central role in chromosome condensation, segregation and cell cycle progression. Functions as a homodimer, which is essential for chromosome partition. Involved in negative DNA supercoiling in vivo, and by this means organize and compact chromosomes. May achieve or facilitate chromosome segregation by condensation DNA from both sides of a centrally located replisome during cell division. In Salmonella typhimurium (strain LT2 / SGSC1412 / ATCC 700720), this protein is Chromosome partition protein MukB.